We begin with the raw amino-acid sequence, 609 residues long: Glutamine--fructose-6-phosphate aminotransferase [isomerizing] (609 aa).

The active-site Nucleophile; for GATase activity is cysteine 2. The Glutamine amidotransferase type-2 domain occupies 2-219 (CGIFGYLGSK…SGELAIVGLG (218 aa)). 2 consecutive SIS domains span residues 280 to 426 (ISEK…SKHT) and 458 to 599 (WAHT…IDCP). Lysine 604 acts as the For Fru-6P isomerization activity in catalysis.

In terms of assembly, homodimer.

The protein resides in the cytoplasm. It carries out the reaction D-fructose 6-phosphate + L-glutamine = D-glucosamine 6-phosphate + L-glutamate. Catalyzes the first step in hexosamine metabolism, converting fructose-6P into glucosamine-6P using glutamine as a nitrogen source. The polypeptide is Glutamine--fructose-6-phosphate aminotransferase [isomerizing] (Chlamydia abortus (strain DSM 27085 / S26/3) (Chlamydophila abortus)).